The primary structure comprises 738 residues: NAD(P)H-quinone oxidoreductase subunit 5, chloroplastic (738 aa).

16 helical membrane-spanning segments follow: residues Trp-9–Phe-29, Trp-40–Ile-60, Ile-89–Ile-109, Phe-125–Ile-145, Ile-147–Thr-167, Gly-185–Phe-205, Ala-230–Leu-250, Thr-258–Ala-278, Leu-280–Ile-300, Leu-327–Ile-347, Ala-354–Ser-374, Ile-396–Ser-416, Trp-425–Tyr-445, Leu-546–Phe-566, Phe-603–Tyr-623, and Tyr-718–Phe-738.

The protein belongs to the complex I subunit 5 family. As to quaternary structure, NDH is composed of at least 16 different subunits, 5 of which are encoded in the nucleus.

The protein localises to the plastid. It is found in the chloroplast thylakoid membrane. The enzyme catalyses a plastoquinone + NADH + (n+1) H(+)(in) = a plastoquinol + NAD(+) + n H(+)(out). It catalyses the reaction a plastoquinone + NADPH + (n+1) H(+)(in) = a plastoquinol + NADP(+) + n H(+)(out). In terms of biological role, NDH shuttles electrons from NAD(P)H:plastoquinone, via FMN and iron-sulfur (Fe-S) centers, to quinones in the photosynthetic chain and possibly in a chloroplast respiratory chain. The immediate electron acceptor for the enzyme in this species is believed to be plastoquinone. Couples the redox reaction to proton translocation, and thus conserves the redox energy in a proton gradient. In Ligustrum vulgare (Common privet), this protein is NAD(P)H-quinone oxidoreductase subunit 5, chloroplastic (ndhF).